The sequence spans 226 residues: 2-C-methyl-D-erythritol 4-phosphate cytidylyltransferase (226 aa).

The protein belongs to the IspD/TarI cytidylyltransferase family. IspD subfamily.

It catalyses the reaction 2-C-methyl-D-erythritol 4-phosphate + CTP + H(+) = 4-CDP-2-C-methyl-D-erythritol + diphosphate. Its pathway is isoprenoid biosynthesis; isopentenyl diphosphate biosynthesis via DXP pathway; isopentenyl diphosphate from 1-deoxy-D-xylulose 5-phosphate: step 2/6. Its function is as follows. Catalyzes the formation of 4-diphosphocytidyl-2-C-methyl-D-erythritol from CTP and 2-C-methyl-D-erythritol 4-phosphate (MEP). In Bacillus cytotoxicus (strain DSM 22905 / CIP 110041 / 391-98 / NVH 391-98), this protein is 2-C-methyl-D-erythritol 4-phosphate cytidylyltransferase.